We begin with the raw amino-acid sequence, 523 residues long: Putative glucosylceramidase 1 (523 aa).

The N-terminal stretch at 1–23 (MKSRFLLKIFIFLAVFGVDSVRA) is a signal peptide. N-linked (GlcNAc...) asparagine glycosylation is present at Asn168. The Nucleophile role is filled by Glu358.

It belongs to the glycosyl hydrolase 30 family.

It carries out the reaction a beta-D-glucosylceramide + H2O = an N-acyl-sphingoid base + D-glucose. The catalysed reaction is a beta-D-glucosyl-(1&lt;-&gt;1')-N-acylsphing-4-enine + H2O = an N-acylsphing-4-enine + D-glucose. The enzyme catalyses an N-acyl-1-beta-D-glucosyl-15-methylhexadecasphing-4-enine + H2O = an N-acyl-15-methylhexadecasphing-4-enine + D-glucose. Its pathway is lipid metabolism; sphingolipid metabolism. Glucosylceramidase that catalyzes the hydrolysis of glucosylceramides into free ceramides and glucose. C.elegans contains specific sphingoid bases, which are unique or different in structure compared to the sphingoid bases found in other animals. Two examples of these distinctive compounds are: 15-methylhexadecasphinganine and 15-methylhexadecasphing-4-enine. In Caenorhabditis elegans, this protein is Putative glucosylceramidase 1 (gba-1).